A 224-amino-acid polypeptide reads, in one-letter code: ATP synthase subunit a (224 aa).

6 consecutive transmembrane segments (helical) span residues 17–37 (FSLNWLSTFLGLLMIPSIYWL), 72–92 (IFISLFSLILFNNFMGLFPYI), 99–119 (LTLTLSLALPLWLCFMLYGWI), 125–145 (MFAHLVPQGTPAILMPFMVCI), 166–186 (IAGHLLLTLLGNTGPSMSYIL), and 187–207 (VTFLLMAQIALLVLESAVAMI).

The protein belongs to the ATPase A chain family. F-type ATPases have 2 components, CF(1) - the catalytic core - and CF(0) - the membrane proton channel. CF(1) has five subunits: alpha(3), beta(3), gamma(1), delta(1), epsilon(1). CF(0) has three main subunits: a, b and c.

It localises to the mitochondrion inner membrane. Functionally, mitochondrial membrane ATP synthase (F(1)F(0) ATP synthase or Complex V) produces ATP from ADP in the presence of a proton gradient across the membrane which is generated by electron transport complexes of the respiratory chain. F-type ATPases consist of two structural domains, F(1) - containing the extramembraneous catalytic core and F(0) - containing the membrane proton channel, linked together by a central stalk and a peripheral stalk. During catalysis, ATP synthesis in the catalytic domain of F(1) is coupled via a rotary mechanism of the central stalk subunits to proton translocation. Key component of the proton channel; it may play a direct role in the translocation of protons across the membrane. The sequence is that of ATP synthase subunit a (mt:ATPase6) from Drosophila melanogaster (Fruit fly).